Reading from the N-terminus, the 571-residue chain is MTDKKTLKDLRNRSSVYDSMVKSPNRAMLRATGMQDEDFEKPIVGVISTWAENTPCNIHLHDFGKLAKVGVKEAGAWPVQFGTITVSDGIAMGTQGMRFSLTSRDIIADSIEAAMGGHNADAFVAIGGCDKNMPGSVIAMANMDIPAIFAYGGTIAPGNLDGKDIDLVSVFEGVGHWNHGDMTKEEVKALECNACPGPGGCGGMYTANTMATAIEVLGLSLPGSSSHPAESAEKKADIEEAGRAVVKMLEMGLKPSDILTREAFEDAITVTMALGGSTNSTLHLLAIAHAANVELTLDDFNTFQEKVPHLADLKPSGQYVFQDLYKVGGVPAVMKYLLKNGFLHGDRITCTGKTVAENLKAFDDLTPGQKVIMPLENPKREDGPLIILHGNLAPDGAVAKVSGVKVRRHVGPAKVFNSEEEAIEAVLNDDIVDGDVVVVRFVGPKGGPGMPEMLSLSSMIVGKGQGEKVALLTDGRFSGGTYGLVVGHIAPEAQDGGPIAYLQTGDIVTIDQDTKELHFDISDEELKHRQETIELPPLYSRGILGKYAHIVSSASRGAVTDFWKPEETGKK.

Cys-56 is a binding site for [2Fe-2S] cluster. Residue Asp-88 coordinates Mg(2+). A [2Fe-2S] cluster-binding site is contributed by Cys-129. The Mg(2+) site is built by Asp-130 and Lys-131. Position 131 is an N6-carboxylysine (Lys-131). Residue Cys-201 coordinates [2Fe-2S] cluster. A Mg(2+)-binding site is contributed by Glu-452. The active-site Proton acceptor is Ser-478.

Belongs to the IlvD/Edd family. In terms of assembly, homodimer. The cofactor is [2Fe-2S] cluster. It depends on Mg(2+) as a cofactor.

It catalyses the reaction (2R)-2,3-dihydroxy-3-methylbutanoate = 3-methyl-2-oxobutanoate + H2O. The enzyme catalyses (2R,3R)-2,3-dihydroxy-3-methylpentanoate = (S)-3-methyl-2-oxopentanoate + H2O. It functions in the pathway amino-acid biosynthesis; L-isoleucine biosynthesis; L-isoleucine from 2-oxobutanoate: step 3/4. It participates in amino-acid biosynthesis; L-valine biosynthesis; L-valine from pyruvate: step 3/4. In terms of biological role, functions in the biosynthesis of branched-chain amino acids. Catalyzes the dehydration of (2R,3R)-2,3-dihydroxy-3-methylpentanoate (2,3-dihydroxy-3-methylvalerate) into 2-oxo-3-methylpentanoate (2-oxo-3-methylvalerate) and of (2R)-2,3-dihydroxy-3-methylbutanoate (2,3-dihydroxyisovalerate) into 2-oxo-3-methylbutanoate (2-oxoisovalerate), the penultimate precursor to L-isoleucine and L-valine, respectively. This is Dihydroxy-acid dehydratase from Streptococcus mutans serotype c (strain ATCC 700610 / UA159).